A 417-amino-acid chain; its full sequence is Neuropeptide FF receptor 2 (417 aa).

At 1–45 (MGKRWDSNSSGSWDHIWSGNDTQHPWYSDINITYMNYYLHQPHVT) the chain is on the extracellular side. Residues Asn8, Asn20, and Asn31 are each glycosylated (N-linked (GlcNAc...) asparagine). A helical membrane pass occupies residues 46–66 (AVFISSYFLIFFLCMVGNTVV). At 67–82 (CFVVIRNRYMHTVTNF) the chain is on the cytoplasmic side. The helical transmembrane segment at 83 to 103 (FIFNLAISDLLVGIFCMPITL) threads the bilayer. Topologically, residues 104–119 (LDNIIAGWPFGSSMCK) are extracellular. An intrachain disulfide couples Cys118 to Cys206. A helical transmembrane segment spans residues 120–140 (ISGLVQGISVAASVFTLVAIA). Residues 141 to 160 (VDRFRCVVYPFKPKLTVKTA) lie on the Cytoplasmic side of the membrane. Residues 161 to 181 (FVMIVIIWGLAITIMTPSAIM) form a helical membrane-spanning segment. The Extracellular segment spans residues 182 to 217 (LHVQEEKYYRVRLSSHNKTSTVYWCREDWPNQEMRR). N-linked (GlcNAc...) asparagine glycosylation occurs at Asn198. The chain crosses the membrane as a helical span at residues 218 to 238 (IYTTVLFATIYLAPLSLIVIM). At 239–274 (YARIGASLFKTSAHSTGKQRLEQWHVSKKKQKVIKM) the chain is on the cytoplasmic side. A helical membrane pass occupies residues 275-295 (LLTVALLFILSWLPLWTLMML). At 296–310 (SDYADLSPNKLRVIN) the chain is on the extracellular side. Residues 311–331 (IYVYPFAHWLAFCNSSVNPII) form a helical membrane-spanning segment. Residues 332–417 (YGFFNENFRS…TGEATNSTET (86 aa)) are Cytoplasmic-facing. The disordered stretch occupies residues 378-417 (HEPASQNPSGENLGCRKSADNPTQESLMEETGEATNSTET).

This sequence belongs to the G-protein coupled receptor 1 family.

Its subcellular location is the cell membrane. Its function is as follows. Receptor for NPAF (A-18-F-amide) and NPFF (F-8-F-amide) neuropeptides, also known as morphine-modulating peptides. Can also be activated by a variety of naturally occurring or synthetic FMRF-amide like ligands. This receptor mediates its action by association with G proteins that activate a phosphatidylinositol-calcium second messenger system. The chain is Neuropeptide FF receptor 2 (Npffr2) from Rattus norvegicus (Rat).